The following is a 214-amino-acid chain: Phosphatidylserine decarboxylase proenzyme (214 aa).

Ser182 serves as the catalytic Schiff-base intermediate with substrate; via pyruvic acid. At Ser182 the chain carries Pyruvic acid (Ser); by autocatalysis.

The protein belongs to the phosphatidylserine decarboxylase family. PSD-A subfamily. As to quaternary structure, heterodimer of a large membrane-associated beta subunit and a small pyruvoyl-containing alpha subunit. Pyruvate serves as cofactor. In terms of processing, is synthesized initially as an inactive proenzyme. Formation of the active enzyme involves a self-maturation process in which the active site pyruvoyl group is generated from an internal serine residue via an autocatalytic post-translational modification. Two non-identical subunits are generated from the proenzyme in this reaction, and the pyruvate is formed at the N-terminus of the alpha chain, which is derived from the carboxyl end of the proenzyme. The post-translation cleavage follows an unusual pathway, termed non-hydrolytic serinolysis, in which the side chain hydroxyl group of the serine supplies its oxygen atom to form the C-terminus of the beta chain, while the remainder of the serine residue undergoes an oxidative deamination to produce ammonia and the pyruvoyl prosthetic group on the alpha chain.

The protein resides in the cell membrane. The enzyme catalyses a 1,2-diacyl-sn-glycero-3-phospho-L-serine + H(+) = a 1,2-diacyl-sn-glycero-3-phosphoethanolamine + CO2. It participates in phospholipid metabolism; phosphatidylethanolamine biosynthesis; phosphatidylethanolamine from CDP-diacylglycerol: step 2/2. Functionally, catalyzes the formation of phosphatidylethanolamine (PtdEtn) from phosphatidylserine (PtdSer). The protein is Phosphatidylserine decarboxylase proenzyme of Burkholderia cenocepacia (strain ATCC BAA-245 / DSM 16553 / LMG 16656 / NCTC 13227 / J2315 / CF5610) (Burkholderia cepacia (strain J2315)).